The chain runs to 353 residues: Photosystem II protein D1 (353 aa).

Position 2 is an N-acetylthreonine (Thr2). At Thr2 the chain carries Phosphothreonine. A run of 3 helical transmembrane segments spans residues 29–46 (YIGW…TATS), 118–133 (HFLL…EWEL), and 142–156 (WIAV…AATA). His118 serves as a coordination point for chlorophyll a. Position 126 (Tyr126) interacts with pheophytin a. 2 residues coordinate [CaMn4O5] cluster: Asp170 and Glu189. The helical transmembrane segment at 197–218 (FHMLGVAGVFGGSLFSAMHGSL) threads the bilayer. His198 serves as a coordination point for chlorophyll a. Residues His215 and 264-265 (SF) contribute to the a quinone site. His215 provides a ligand contact to Fe cation. A Fe cation-binding site is contributed by His272. Residues 274–288 (FLTAWPVVGIWFTAL) traverse the membrane as a helical segment. Residues His332, Glu333, Asp342, and Ala344 each contribute to the [CaMn4O5] cluster site. Positions 345–353 (VVEAPSTNG) are excised as a propeptide.

It belongs to the reaction center PufL/M/PsbA/D family. PSII is composed of 1 copy each of membrane proteins PsbA, PsbB, PsbC, PsbD, PsbE, PsbF, PsbH, PsbI, PsbJ, PsbK, PsbL, PsbM, PsbT, PsbX, PsbY, PsbZ, Psb30/Ycf12, at least 3 peripheral proteins of the oxygen-evolving complex and a large number of cofactors. It forms dimeric complexes. The cofactor is The D1/D2 heterodimer binds P680, chlorophylls that are the primary electron donor of PSII, and subsequent electron acceptors. It shares a non-heme iron and each subunit binds pheophytin, quinone, additional chlorophylls, carotenoids and lipids. D1 provides most of the ligands for the Mn4-Ca-O5 cluster of the oxygen-evolving complex (OEC). There is also a Cl(-1) ion associated with D1 and D2, which is required for oxygen evolution. The PSII complex binds additional chlorophylls, carotenoids and specific lipids.. In terms of processing, tyr-161 forms a radical intermediate that is referred to as redox-active TyrZ, YZ or Y-Z. C-terminally processed by CTPA; processing is essential to allow assembly of the oxygen-evolving complex and thus photosynthetic growth.

The protein resides in the plastid. It localises to the chloroplast thylakoid membrane. It catalyses the reaction 2 a plastoquinone + 4 hnu + 2 H2O = 2 a plastoquinol + O2. Photosystem II (PSII) is a light-driven water:plastoquinone oxidoreductase that uses light energy to abstract electrons from H(2)O, generating O(2) and a proton gradient subsequently used for ATP formation. It consists of a core antenna complex that captures photons, and an electron transfer chain that converts photonic excitation into a charge separation. The D1/D2 (PsbA/PsbD) reaction center heterodimer binds P680, the primary electron donor of PSII as well as several subsequent electron acceptors. The polypeptide is Photosystem II protein D1 (Aethionema cordifolium (Lebanon stonecress)).